The following is a 390-amino-acid chain: Bibenzyl synthase (390 aa).

Cys164 is a catalytic residue.

Belongs to the thiolase-like superfamily. Chalcone/stilbene synthases family.

It carries out the reaction 3-(3-hydroxyphenyl)-propanoyl-CoA + 3 malonyl-CoA + 3 H(+) = 3,3',5-trihydroxybibenzyl + 4 CO2 + 4 CoA. The chain is Bibenzyl synthase (BIBSY212) from Phalaenopsis sp. (Moth orchid).